A 181-amino-acid polypeptide reads, in one-letter code: Large ribosomal subunit protein uL5 (181 aa).

Belongs to the universal ribosomal protein uL5 family. As to quaternary structure, part of the 50S ribosomal subunit; part of the 5S rRNA/L5/L18/L25 subcomplex. Contacts the 5S rRNA and the P site tRNA. Forms a bridge to the 30S subunit in the 70S ribosome.

Functionally, this is one of the proteins that bind and probably mediate the attachment of the 5S RNA into the large ribosomal subunit, where it forms part of the central protuberance. In the 70S ribosome it contacts protein S13 of the 30S subunit (bridge B1b), connecting the 2 subunits; this bridge is implicated in subunit movement. Contacts the P site tRNA; the 5S rRNA and some of its associated proteins might help stabilize positioning of ribosome-bound tRNAs. The sequence is that of Large ribosomal subunit protein uL5 from Baumannia cicadellinicola subsp. Homalodisca coagulata.